We begin with the raw amino-acid sequence, 508 residues long: Lysine--tRNA ligase (508 aa).

Residues Glu-418 and Glu-425 each coordinate Mg(2+).

It belongs to the class-II aminoacyl-tRNA synthetase family. In terms of assembly, homodimer. Requires Mg(2+) as cofactor.

Its subcellular location is the cytoplasm. The catalysed reaction is tRNA(Lys) + L-lysine + ATP = L-lysyl-tRNA(Lys) + AMP + diphosphate. The sequence is that of Lysine--tRNA ligase from Burkholderia cenocepacia (strain HI2424).